A 615-amino-acid chain; its full sequence is ATP-dependent zinc metalloprotease FtsH (615 aa).

The Cytoplasmic segment spans residues 1-8 (MAMNKDKP). The helical transmembrane segment at 9-29 (WTLYLLAVGLAVLAAVQFGLF) threads the bilayer. Residues 30-104 (SQPAVQAIPY…FSGVVEDNTV (75 aa)) lie on the Periplasmic side of the membrane. The helical transmembrane segment at 105-125 (ATVMGALMPLLMLLALWYFLF) threads the bilayer. Over 126-615 (HGLGQKQGLG…ATYVLVDATK (490 aa)) the chain is Cytoplasmic. Residue 198-205 (GPPGTGKT) participates in ATP binding. His-420 is a binding site for Zn(2+). The active site involves Glu-421. The Zn(2+) site is built by His-424 and Asp-497.

It in the central section; belongs to the AAA ATPase family. The protein in the C-terminal section; belongs to the peptidase M41 family. As to quaternary structure, homohexamer. Zn(2+) serves as cofactor.

The protein localises to the cell inner membrane. In terms of biological role, acts as a processive, ATP-dependent zinc metallopeptidase for both cytoplasmic and membrane proteins. Plays a role in the quality control of integral membrane proteins. This Pseudomonas putida (strain ATCC 700007 / DSM 6899 / JCM 31910 / BCRC 17059 / LMG 24140 / F1) protein is ATP-dependent zinc metalloprotease FtsH.